The sequence spans 185 residues: Urease accessory protein UreE (185 aa).

A disordered region spans residues 153–185 (LRANSAQGHGHSHSHSHDHHGYHHHGDGNWHKH). Positions 162–175 (GHSHSHSHDHHGYH) are enriched in basic residues. Residues 176-185 (HHGDGNWHKH) are compositionally biased toward basic and acidic residues.

It belongs to the UreE family.

It localises to the cytoplasm. Its function is as follows. Involved in urease metallocenter assembly. Binds nickel. Probably functions as a nickel donor during metallocenter assembly. This Haemophilus influenzae (strain PittGG) protein is Urease accessory protein UreE.